Here is a 187-residue protein sequence, read N- to C-terminus: ATP synthase subunit b 2 (187 aa).

Positions 1 to 12 (MAQERAEHESAD) are enriched in basic and acidic residues. Residues 1–31 (MAQERAEHESADQHTTSTGVPHEGQGEPFPP) form a disordered region. Residues 40 to 60 (LLIWLAISFLLLYALMSKLVL) traverse the membrane as a helical segment.

This sequence belongs to the ATPase B chain family. In terms of assembly, F-type ATPases have 2 components, F(1) - the catalytic core - and F(0) - the membrane proton channel. F(1) has five subunits: alpha(3), beta(3), gamma(1), delta(1), epsilon(1). F(0) has three main subunits: a(1), b(2) and c(10-14). The alpha and beta chains form an alternating ring which encloses part of the gamma chain. F(1) is attached to F(0) by a central stalk formed by the gamma and epsilon chains, while a peripheral stalk is formed by the delta and b chains.

The protein localises to the cell inner membrane. F(1)F(0) ATP synthase produces ATP from ADP in the presence of a proton or sodium gradient. F-type ATPases consist of two structural domains, F(1) containing the extramembraneous catalytic core and F(0) containing the membrane proton channel, linked together by a central stalk and a peripheral stalk. During catalysis, ATP synthesis in the catalytic domain of F(1) is coupled via a rotary mechanism of the central stalk subunits to proton translocation. Its function is as follows. Component of the F(0) channel, it forms part of the peripheral stalk, linking F(1) to F(0). The b'-subunit is a diverged and duplicated form of b found in plants and photosynthetic bacteria. This is ATP synthase subunit b 2 (atpF2) from Beijerinckia indica subsp. indica (strain ATCC 9039 / DSM 1715 / NCIMB 8712).